The sequence spans 206 residues: Protein PH0010 (206 aa).

The 195-residue stretch at 8-202 (EWGEFLVRLA…EEYPRGPIKR (195 aa)) folds into the AMMECR1 domain.

The chain is Protein PH0010 from Pyrococcus horikoshii (strain ATCC 700860 / DSM 12428 / JCM 9974 / NBRC 100139 / OT-3).